A 181-amino-acid polypeptide reads, in one-letter code: Histone deacetylase complex subunit SAP30L-A (181 aa).

Cystine bridges form between Cys26/Cys27 and Cys35/Cys71. The Atypical zinc finger occupies 26 to 74; sequence CCLIDGGERCPRPAGNASFSKRVQKSISQKKLKLDIDKNVRHLYICDFH. The tract at residues 82-103 is disordered; that stretch reads RNKRKRKTSDDGGDSPEHETDI. Residues 83 to 88 carry the Nuclear localization signal (NLS) motif; sequence NKRKRK. Residues 85 to 87 form an important for DNA and phosphoinositide binding region; the sequence is RKR.

Belongs to the SAP30 family. In terms of assembly, interacts with components of the histone deacetylase complex sin3a, hdac1 and hdac2. Binds histones and nucleosomes.

The protein resides in the nucleus. It localises to the nucleolus. Its function is as follows. Functions as a transcription repressor, probably via its interaction with histone deacetylase complexes. Involved in the functional recruitment of the class 1 Sin3-histone deacetylase complex (HDAC) to the nucleolus. Binds DNA, apparently without sequence-specificity, and bends bound double-stranded DNA. Binds phosphoinositol phosphates (phosphoinositol 3-phosphate, phosphoinositol 4-phosphate and phosphoinositol 5-phosphate) via the same basic sequence motif that mediates DNA binding and nuclear import. The chain is Histone deacetylase complex subunit SAP30L-A (sap30l-a) from Xenopus laevis (African clawed frog).